We begin with the raw amino-acid sequence, 542 residues long: MDEYLENTNLEELEQECFMEDYQHEDVVEQENHQVDANDIYENQQMNDESQLNQDVKISQQKEQAVEMIEEQQQNNQDKFKQFQDCMAHITELNFKRNYQNLTEQSSSNNVVAEELDIKESLKLQMEYYFCDTNLTHDSYLRGIISKSPKNCVDIKVFLKFNKIQQILKQIQDKQIVSTYGIENQSQKKNHKNYKNQNATFSKKDLIHLIRDSLKESKILKVKMDSLKVKRRFPFNLEQALKNSKQRTLYIDFLPPKCSKQTLVSIFGNFRIININLPLQKNSQLCQGFAFIEFFSEEEANQALITKNSSIPKELILLTEKKIGQGSIRIITYKKWQEEKQSFKELSKNQNEQKNKNMNQSRKASDEFVSIDVEIKQNCLIKIINIPQGTLKAEVVLAVRHLGYEFYCDYIDENSNQINSNKISLSTQQQNTAQCSNIQIENNLIQQDQHPQLNDLLKEGQAMIRFQNSDEQRLAIQKLLNHNNNKLQIEIRGQICDVISTIPEDEEKNYWNYIKFKKNEFRKFFFMKKQQKKQNITQNYNK.

An HTH La-type RNA-binding domain is found at 112–239; it reads VAEELDIKES…KRRFPFNLEQ (128 aa). Residues 247 to 335 form the RRM domain; sequence RTLYIDFLPP…GSIRIITYKK (89 aa). Residues 374 to 542 form the xRRM domain; it reads EIKQNCLIKI…KQNITQNYNK (169 aa).

It belongs to the LARP7 family. As to quaternary structure, component of the telomerase holoenzyme complex, composed of the catalytic core (the catalytic subunit TERT, the telomerase RNA template component TER and TAP65/p65), which is associated with two heterotrimeric subcomplexes: (i) the replication protein A (RPA)-related subcomplex, composed of TEB1, RPA2/TEB2 and RPA3/TEB3 and (ii) the CST-like subcomplex, composed of TAP75/p75, TAP45/p45 and TAP19/p19. TEB1 and the CST-like subcomplex are tethered to the catalytic core by TAP50/p50.

It localises to the chromosome. The protein localises to the telomere. RNA-binding protein required for assembly of the holoenzyme telomerase ribonucleoprotein (RNP) complex. Telomerase is an essential ribonucleoprotein enzyme that copies new telomeric repeats onto chromosome ends by repetitively synthesizing the short telomere-repeat sequence 5'-TTGGGG-3' using an RNA template component TER. TAP65/p65 specifically binds telomerase RNA template TER and is required for biogenesis and placement of the TER stem-terminus element: TAP65/p65 first protects the 3'-end of TER from degradation and acts as a chaperone to correctly fold TER for protein binding; it then bends TER stem-loop IV to position it for interaction of stem-loop IV with catalytic TERT RNA-binding domain. In Tetrahymena thermophila (strain SB210), this protein is La-related protein 7 homolog.